Consider the following 314-residue polypeptide: MVADTHQRGTAKTARNPIKIDLEQSGQLLRKPSWIRVRSPNSQRYQEVKRLLRENKLHTVCEEASCPNIGECFGRGTATFMILGDLCTRRCPFCDVAHGRPHAPDPDEPMHLAKSIAVLKLNYVVITSVDRDDLRDGGAQHFADCIRAIRAQSPQTRIEILVPDFRGRLEIALEKLSACPPDVMNHNLETVPRLYKQCRPGADYVHSLQLLKDFKAASPHIPTKSGLMLGLGETDEEIIGVMQDLRAHQVNMLTIGQYLQPSIGHHPVMRYVSPEDFKTFERIATNLGFSHAACGPMVRSSYHADQQAHEAGIE.

Positions 61, 66, 72, 87, 91, 94, and 301 each coordinate [4Fe-4S] cluster. The Radical SAM core domain maps to 73 to 290 (FGRGTATFMI…ERIATNLGFS (218 aa)).

Belongs to the radical SAM superfamily. Lipoyl synthase family. It depends on [4Fe-4S] cluster as a cofactor.

It is found in the cytoplasm. The catalysed reaction is [[Fe-S] cluster scaffold protein carrying a second [4Fe-4S](2+) cluster] + N(6)-octanoyl-L-lysyl-[protein] + 2 oxidized [2Fe-2S]-[ferredoxin] + 2 S-adenosyl-L-methionine + 4 H(+) = [[Fe-S] cluster scaffold protein] + N(6)-[(R)-dihydrolipoyl]-L-lysyl-[protein] + 4 Fe(3+) + 2 hydrogen sulfide + 2 5'-deoxyadenosine + 2 L-methionine + 2 reduced [2Fe-2S]-[ferredoxin]. Its pathway is protein modification; protein lipoylation via endogenous pathway; protein N(6)-(lipoyl)lysine from octanoyl-[acyl-carrier-protein]: step 2/2. Its function is as follows. Catalyzes the radical-mediated insertion of two sulfur atoms into the C-6 and C-8 positions of the octanoyl moiety bound to the lipoyl domains of lipoate-dependent enzymes, thereby converting the octanoylated domains into lipoylated derivatives. In Nitrosomonas eutropha (strain DSM 101675 / C91 / Nm57), this protein is Lipoyl synthase.